The chain runs to 293 residues: MAIRLYRAYTPGTRNRTVSTFSEITTDKPEKSLIVKHHFCKGRNNRGVITCRHKGGGHKQQYRLIDFKRNRHNIVAKVASIEYDPNRNARIALLHYLDGEKRYILHPRSLSVGSMVLSGPTAPIEVGNALPLSSIPLGTAVHNIELRPSCGGQIVRAAGTYAQIVAKEGTFVTVKLPSSEVRMIRKECYATIGQVGNIDASNITLGKAGRNRWLGKRPTVRGVVMNPVDHPHGGGEGKSPIGRARPVTPWGKPALGVKTRNPNKYSNPYVLRPVNRIYFIKNLMIYYYVKIYT.

The interval 224-245 is disordered; sequence VMNPVDHPHGGGEGKSPIGRAR.

It belongs to the universal ribosomal protein uL2 family. Part of the 50S ribosomal subunit.

It is found in the plastid. The protein localises to the chloroplast. The chain is Large ribosomal subunit protein uL2c (rpl2) from Pyropia yezoensis (Susabi-nori).